A 331-amino-acid polypeptide reads, in one-letter code: (E)-beta farnesene synthase MBR_03882 (331 aa).

Belongs to the trichodiene synthase family.

It carries out the reaction (2E,6E)-farnesyl diphosphate = (E)-beta-farnesene + diphosphate. Functionally, terpene synthase that catalyzes the conversion of (2E,6E)-farnesyl diphosphate (FPP) into the volatile sesquiterpene (E)-beta-farnesene. In Metarhizium brunneum (strain ARSEF 3297), this protein is (E)-beta farnesene synthase MBR_03882.